We begin with the raw amino-acid sequence, 93 residues long: MVKIRLTRVGAKNKPAYRIVAMDSREPRDGKHLEILGFYDPKTDPATIQLKEERILYWLSQGAQPTDTVLSILKRYGVWDKFLAMKKSAKSSA.

The protein belongs to the bacterial ribosomal protein bS16 family.

The chain is Small ribosomal subunit protein bS16 from Dictyoglomus turgidum (strain DSM 6724 / Z-1310).